The primary structure comprises 334 residues: Protein-methionine-sulfoxide reductase catalytic subunit MsrP (334 aa).

A signal peptide (tat-type signal) is located at residues 1 to 44 (MKKKQFLKESDVTAESVFFMKRRQVLKALGISAAALSLPHAAHA). Residues Asn-88, 91-92 (YE), Cys-146, Thr-181, Asn-233, Arg-238, and 249-251 (GIK) each bind Mo-molybdopterin.

It belongs to the MsrP family. Heterodimer of a catalytic subunit (MsrP) and a heme-binding subunit (MsrQ). Requires Mo-molybdopterin as cofactor. Post-translationally, predicted to be exported by the Tat system. The position of the signal peptide cleavage has not been experimentally proven.

It localises to the periplasm. The enzyme catalyses L-methionyl-[protein] + a quinone + H2O = L-methionyl-(S)-S-oxide-[protein] + a quinol. It catalyses the reaction L-methionyl-[protein] + a quinone + H2O = L-methionyl-(R)-S-oxide-[protein] + a quinol. In terms of biological role, part of the MsrPQ system that repairs oxidized periplasmic proteins containing methionine sulfoxide residues (Met-O), using respiratory chain electrons. Thus protects these proteins from oxidative-stress damage caused by reactive species of oxygen and chlorine generated by the host defense mechanisms. MsrPQ is essential for the maintenance of envelope integrity under bleach stress, rescuing a wide series of structurally unrelated periplasmic proteins from methionine oxidation, including the primary periplasmic chaperone SurA and the lipoprotein Pal. The catalytic subunit MsrP is non-stereospecific, being able to reduce both (R-) and (S-) diastereoisomers of methionine sulfoxide. In Escherichia coli O139:H28 (strain E24377A / ETEC), this protein is Protein-methionine-sulfoxide reductase catalytic subunit MsrP.